A 94-amino-acid polypeptide reads, in one-letter code: DNA-binding protein HU (94 aa).

The tract at residues 55 to 94 is disordered; the sequence is RAERPGRNPKTGEPIMIAASNNPSFKPGKALKDAVKSSAG. Residues 84-94 show a composition bias toward basic and acidic residues; the sequence is ALKDAVKSSAG.

Belongs to the bacterial histone-like protein family.

Functionally, histone-like DNA-binding protein which is capable of wrapping DNA to stabilize it, and thus to prevent its denaturation under extreme environmental conditions. This chain is DNA-binding protein HU (hup), found in Xylella fastidiosa (strain Temecula1 / ATCC 700964).